The sequence spans 321 residues: Transmembrane and ubiquitin-like domain-containing protein 2 (321 aa).

A helical transmembrane segment spans residues 36–56 (VMVVAGVVVLILALVLAWLST). 2 disordered regions span residues 87–131 (LVAG…GGVE) and 145–170 (KRQAGAGSSSPEAPLRSEDSTCLPPS). Residues 104–120 (EGNDEKAEEAGEGRGDS) are compositionally biased toward basic and acidic residues. A Ubiquitin-like domain is found at 174–247 (ITVRLKFLND…IHCHRSPPGS (74 aa)). 2 helical membrane-spanning segments follow: residues 266 to 286 (LGVNVGSLMVPVFVVLLGVVW) and 295 to 315 (FFTAPATVSLVGVTVFFSFLV).

The protein resides in the membrane. The sequence is that of Transmembrane and ubiquitin-like domain-containing protein 2 (TMUB2) from Homo sapiens (Human).